A 152-amino-acid chain; its full sequence is Transcriptional repressor NrdR (152 aa).

Residues 3–34 fold into a zinc finger; sequence CPFCNHGELKVIDSRNSPEANAIKRRRECLRC. The 91-residue stretch at 48–138 folds into the ATP-cone domain; that stretch reads IQVLKRDGRY…VYRRFRDVGE (91 aa).

This sequence belongs to the NrdR family. Zn(2+) serves as cofactor.

Negatively regulates transcription of bacterial ribonucleotide reductase nrd genes and operons by binding to NrdR-boxes. The sequence is that of Transcriptional repressor NrdR from Chlamydia muridarum (strain MoPn / Nigg).